The primary structure comprises 180 residues: Nucleoplasmin-3 (180 aa).

Ala2 bears the N-acetylalanine mark. Residues Ser13 and Ser16 each carry the phosphoserine modification. Arg27 bears the Omega-N-methylarginine mark. Residues 141–180 (TMSNDVSEEESEEEEEEEDSDEEEAELCPILPAKKQGGRP) are disordered. Residues 146 to 166 (VSEEESEEEEEEEDSDEEEAE) are compositionally biased toward acidic residues. Ser147, Ser151, and Ser160 each carry phosphoserine.

It belongs to the nucleoplasmin family. In terms of assembly, interacts with NPM (via N-terminus). Forms a pentamer with NPM at a ratio 4:1 (NPM3/NPM). Two pentamers form a decamer. Post-translationally, phosphorylated.

It localises to the nucleus. It is found in the nucleolus. Its function is as follows. Plays a role in the regulation of diverse cellular processes such as ribosome biogenesis, chromatin remodeling or protein chaperoning. Modulates the histone chaperone function and the RNA-binding activity of nucleolar phosphoprotein B23/NPM. Efficiently mediates chromatin remodeling when included in a pentamer containing NPM3 and NPM. The polypeptide is Nucleoplasmin-3 (NPM3) (Pongo abelii (Sumatran orangutan)).